The following is a 474-amino-acid chain: Bifunctional protein HldE (474 aa).

The interval 1-318 (MKLSMPRFDQ…RAIQREEGSE (318 aa)) is ribokinase. An ATP-binding site is contributed by 194–197 (NLSE). Residue Asp263 is part of the active site. The interval 343–474 (FTNGCFDILH…AIVEKIRGQG (132 aa)) is cytidylyltransferase.

It in the N-terminal section; belongs to the carbohydrate kinase PfkB family. In the C-terminal section; belongs to the cytidylyltransferase family. In terms of assembly, homodimer.

It carries out the reaction D-glycero-beta-D-manno-heptose 7-phosphate + ATP = D-glycero-beta-D-manno-heptose 1,7-bisphosphate + ADP + H(+). The enzyme catalyses D-glycero-beta-D-manno-heptose 1-phosphate + ATP + H(+) = ADP-D-glycero-beta-D-manno-heptose + diphosphate. It participates in nucleotide-sugar biosynthesis; ADP-L-glycero-beta-D-manno-heptose biosynthesis; ADP-L-glycero-beta-D-manno-heptose from D-glycero-beta-D-manno-heptose 7-phosphate: step 1/4. Its pathway is nucleotide-sugar biosynthesis; ADP-L-glycero-beta-D-manno-heptose biosynthesis; ADP-L-glycero-beta-D-manno-heptose from D-glycero-beta-D-manno-heptose 7-phosphate: step 3/4. Catalyzes the phosphorylation of D-glycero-D-manno-heptose 7-phosphate at the C-1 position to selectively form D-glycero-beta-D-manno-heptose-1,7-bisphosphate. Its function is as follows. Catalyzes the ADP transfer from ATP to D-glycero-beta-D-manno-heptose 1-phosphate, yielding ADP-D-glycero-beta-D-manno-heptose. In Pseudomonas syringae pv. syringae (strain B728a), this protein is Bifunctional protein HldE.